Consider the following 114-residue polypeptide: Adapter SH3BGRL (114 aa).

Residues 13-50 (STAIKKKQQDVLGFLEANKIGFEEKDIAANEENRKWMR) are required for interaction with HER2. Positions 54 to 71 (PENSRPATGYPLPPQIFN) are required for interaction with PFN1, HER2, and ATG12. Residues 61–67 (TGYPLPP) carry the SH3-binding motif.

It belongs to the SH3BGR family. As to quaternary structure, monomer. Interacts with PFN1/Profilin-1. Interacts with ERBB2. Interacts with ATG12. Interacts with BECN1. Interacts with translating ribosomes. Ubiquitous.

Its subcellular location is the cytoplasm. It is found in the cytosol. The protein localises to the cell membrane. Functionally, appears to function as an adapter protein that bridges proteins together or proteins with mRNAs. May function as a ubiquitin ligase-substrate adapter. Additionally, associates with translating cytoplasmic ribosomes and may promote the expression of specific mRNAs. The polypeptide is Adapter SH3BGRL (Homo sapiens (Human)).